Reading from the N-terminus, the 356-residue chain is MLDRLKSIEERYEKLNELLSDPEVVNDPKKLREYSKEQSDIQETVDVYRQYRDASEQLADAKAMLEEKLDAEMRDMVKEEISELQKETETLSERLKVLLIPKDPNDDKNVIMEIRGAAGGEEAALFAGNLYRMYSRYAELQGWKTEVMEANVTGTGGYKEIIFMITGSGAYSKLKYENGAHRVQRVPETESGGRIHTSTATVACLPEAEEVEVDIHEKDIRVDTFASSGPGGQSVNTTMSAVRLTHLPTGVVVSCQDEKSQIKNKEKAMKVLRARIYDKFQQEAQAEYDQTRKSAVGSGDRSERIRTYNFPQNRVTDHRIGLTIQKLDQILEGKLDEVVEALIVEDQASKLQQSEG.

Glutamine 233 bears the N5-methylglutamine mark.

It belongs to the prokaryotic/mitochondrial release factor family. Methylated by PrmC. Methylation increases the termination efficiency of RF1.

It localises to the cytoplasm. Peptide chain release factor 1 directs the termination of translation in response to the peptide chain termination codons UAG and UAA. This is Peptide chain release factor 1 (prfA) from Bacillus subtilis (strain 168).